Reading from the N-terminus, the 99-residue chain is Large ribosomal subunit protein bL21 (99 aa).

This sequence belongs to the bacterial ribosomal protein bL21 family. In terms of assembly, part of the 50S ribosomal subunit. Contacts protein L20.

In terms of biological role, this protein binds to 23S rRNA in the presence of protein L20. This Deinococcus geothermalis (strain DSM 11300 / CIP 105573 / AG-3a) protein is Large ribosomal subunit protein bL21.